The following is a 186-amino-acid chain: Threonylcarbamoyl-AMP synthase (186 aa).

In terms of domain architecture, YrdC-like spans 5–186 (LLTIKAAAKL…WEAQTQKRLR (182 aa)).

The protein belongs to the SUA5 family. TsaC subfamily.

It is found in the cytoplasm. The catalysed reaction is L-threonine + hydrogencarbonate + ATP = L-threonylcarbamoyladenylate + diphosphate + H2O. Its function is as follows. Required for the formation of a threonylcarbamoyl group on adenosine at position 37 (t(6)A37) in tRNAs that read codons beginning with adenine. Catalyzes the conversion of L-threonine, HCO(3)(-)/CO(2) and ATP to give threonylcarbamoyl-AMP (TC-AMP) as the acyladenylate intermediate, with the release of diphosphate. The polypeptide is Threonylcarbamoyl-AMP synthase (Hydrogenovibrio crunogenus (strain DSM 25203 / XCL-2) (Thiomicrospira crunogena)).